The primary structure comprises 331 residues: Nodulation protein D 2 (331 aa).

One can recognise an HTH lysR-type domain in the interval L6 to T63. The H-T-H motif DNA-binding region spans L23 to A42.

The protein belongs to the LysR transcriptional regulatory family.

Functionally, nodD regulates the expression of the nodABCFE genes which encode other nodulation proteins. NodD is also a negative regulator of its own expression. Binds flavonoids as inducers. This chain is Nodulation protein D 2 (nodD2), found in Bradyrhizobium elkanii.